A 208-amino-acid chain; its full sequence is N-(5'-phosphoribosyl)anthranilate isomerase (208 aa).

Belongs to the TrpF family.

The catalysed reaction is N-(5-phospho-beta-D-ribosyl)anthranilate = 1-(2-carboxyphenylamino)-1-deoxy-D-ribulose 5-phosphate. It functions in the pathway amino-acid biosynthesis; L-tryptophan biosynthesis; L-tryptophan from chorismate: step 3/5. The chain is N-(5'-phosphoribosyl)anthranilate isomerase from Nitrosomonas eutropha (strain DSM 101675 / C91 / Nm57).